The chain runs to 556 residues: Phosphoenolpyruvate-protein phosphotransferase (556 aa).

The active-site Tele-phosphohistidine intermediate is the H186. Residues R288 and R325 each contribute to the phosphoenolpyruvate site. Positions 415 and 439 each coordinate Mg(2+). Residues N438 to D439 and R449 contribute to the phosphoenolpyruvate site. C486 (proton donor) is an active-site residue.

Belongs to the PEP-utilizing enzyme family. As to quaternary structure, homodimer. It depends on Mg(2+) as a cofactor.

It is found in the cytoplasm. The catalysed reaction is L-histidyl-[protein] + phosphoenolpyruvate = N(pros)-phospho-L-histidyl-[protein] + pyruvate. Its function is as follows. General (non sugar-specific) component of the phosphoenolpyruvate-dependent sugar phosphotransferase system (sugar PTS). This major carbohydrate active-transport system catalyzes the phosphorylation of incoming sugar substrates concomitantly with their translocation across the cell membrane. Enzyme I transfers the phosphoryl group from phosphoenolpyruvate (PEP) to the phosphoryl carrier protein (HPr). The polypeptide is Phosphoenolpyruvate-protein phosphotransferase (ptsI) (Streptomyces coelicolor (strain ATCC BAA-471 / A3(2) / M145)).